The chain runs to 67 residues: DNA-directed RNA polymerase subunit omega (67 aa).

This sequence belongs to the RNA polymerase subunit omega family. As to quaternary structure, the RNAP catalytic core consists of 2 alpha, 1 beta, 1 beta' and 1 omega subunit. When a sigma factor is associated with the core the holoenzyme is formed, which can initiate transcription.

The enzyme catalyses RNA(n) + a ribonucleoside 5'-triphosphate = RNA(n+1) + diphosphate. Functionally, promotes RNA polymerase assembly. Latches the N- and C-terminal regions of the beta' subunit thereby facilitating its interaction with the beta and alpha subunits. This chain is DNA-directed RNA polymerase subunit omega, found in Ralstonia nicotianae (strain ATCC BAA-1114 / GMI1000) (Ralstonia solanacearum).